Consider the following 1584-residue polypeptide: Dicer-like protein 1 (1584 aa).

The segment at 31 to 60 is disordered; it reads EDVVSDNDDRGNASDVESEDGVKRWTVNPE. Residues 129-310 enclose the Helicase ATP-binding domain; that stretch reads LFERAKQQNT…RAAAELEALL (182 aa). An ATP-binding site is contributed by 142–149; it reads LDTGSGKT. Positions 255 to 258 match the DEAH box motif; sequence DEAH. Residues 448–621 enclose the Helicase C-terminal domain; sequence KVIMLVRILR…EALPEDRKLT (174 aa). Residues 654–744 form the Dicer dsRNA-binding fold domain; that stretch reads SLVCLANFTA…QSVFTKQLPE (91 aa). Residues 894–1028 form the PAZ domain; that stretch reads KALAYVSENE…LILEPMRISP (135 aa). RNase III domains are found at residues 1052–1207 and 1258–1424; these read VALD…LTGQ and AKKF…VDSE. 3 residues coordinate Mg(2+): E1298, D1410, and E1413. The 88-residue stretch at 1458–1545 folds into the DRBM domain; sequence TFVANMMAHK…AKKAIKLLEG (88 aa). Positions 1470, 1516, 1557, and 1559 each coordinate Zn(2+).

Belongs to the helicase family. Dicer subfamily. Mg(2+) is required as a cofactor. Mn(2+) serves as cofactor.

Dicer-like endonuclease involved in cleaving double-stranded RNA in the RNA interference (RNAi) pathway. Produces 21 to 25 bp dsRNAs (siRNAs) which target the selective destruction of homologous RNAs leading to sequence-specific suppression of gene expression, called post-transcriptional gene silencing (PTGS). Part of a broad host defense response against viral infection and transposons. Controls the expression of the non-LTR retrotransposon Tad in the African strain, Adiomopoume. In Neurospora crassa (strain ATCC 24698 / 74-OR23-1A / CBS 708.71 / DSM 1257 / FGSC 987), this protein is Dicer-like protein 1 (dcl-1).